A 212-amino-acid chain; its full sequence is Imidazole glycerol phosphate synthase subunit HisH (212 aa).

The Glutamine amidotransferase type-1 domain occupies 3–212; it reads SIAVVDYGMG…LLSNFLKWTP (210 aa). Cys-82 (nucleophile) is an active-site residue. Active-site residues include His-192 and Glu-194.

Heterodimer of HisH and HisF.

It localises to the cytoplasm. The catalysed reaction is 5-[(5-phospho-1-deoxy-D-ribulos-1-ylimino)methylamino]-1-(5-phospho-beta-D-ribosyl)imidazole-4-carboxamide + L-glutamine = D-erythro-1-(imidazol-4-yl)glycerol 3-phosphate + 5-amino-1-(5-phospho-beta-D-ribosyl)imidazole-4-carboxamide + L-glutamate + H(+). It carries out the reaction L-glutamine + H2O = L-glutamate + NH4(+). It functions in the pathway amino-acid biosynthesis; L-histidine biosynthesis; L-histidine from 5-phospho-alpha-D-ribose 1-diphosphate: step 5/9. Functionally, IGPS catalyzes the conversion of PRFAR and glutamine to IGP, AICAR and glutamate. The HisH subunit catalyzes the hydrolysis of glutamine to glutamate and ammonia as part of the synthesis of IGP and AICAR. The resulting ammonia molecule is channeled to the active site of HisF. The sequence is that of Imidazole glycerol phosphate synthase subunit HisH from Nitrosomonas europaea (strain ATCC 19718 / CIP 103999 / KCTC 2705 / NBRC 14298).